We begin with the raw amino-acid sequence, 152 residues long: D-aminoacyl-tRNA deacylase (152 aa).

The Gly-cisPro motif, important for rejection of L-amino acids signature appears at 142–143 (GP).

Belongs to the DTD family. Homodimer.

It is found in the cytoplasm. The catalysed reaction is glycyl-tRNA(Ala) + H2O = tRNA(Ala) + glycine + H(+). It catalyses the reaction a D-aminoacyl-tRNA + H2O = a tRNA + a D-alpha-amino acid + H(+). In terms of biological role, an aminoacyl-tRNA editing enzyme that deacylates mischarged D-aminoacyl-tRNAs. Also deacylates mischarged glycyl-tRNA(Ala), protecting cells against glycine mischarging by AlaRS. Acts via tRNA-based rather than protein-based catalysis; rejects L-amino acids rather than detecting D-amino acids in the active site. By recycling D-aminoacyl-tRNA to D-amino acids and free tRNA molecules, this enzyme counteracts the toxicity associated with the formation of D-aminoacyl-tRNA entities in vivo and helps enforce protein L-homochirality. This Burkholderia mallei (strain NCTC 10247) protein is D-aminoacyl-tRNA deacylase.